A 1315-amino-acid chain; its full sequence is Chaoptin (1315 aa).

Residues 1–29 (MGLEFFFKFGYAFLTITLMIMIWMSLARA) form the signal peptide. Asn-77 carries an N-linked (GlcNAc...) (high mannose) asparagine; alternate glycan. N-linked (GlcNAc...) (paucimannose) asparagine; alternate glycosylation is present at Asn-77. 9 LRR repeats span residues 80–101 (KVFM…FLQS), 103–124 (GMYR…AFTG), 128–149 (SLWE…SLRH), 152–173 (KLRH…SFRG), 177–198 (SLQT…SFSG), 201–222 (ILET…VFVD), 226–247 (RLTR…ALGP), 250–271 (SLRT…ETYE), and 279–300 (NLDN…SFKY). The N-linked (GlcNAc...) (paucimannose) asparagine; alternate glycan is linked to Asn-267. Asn-267 carries an N-linked (GlcNAc...) (complex) asparagine; alternate glycan. A glycan (N-linked (GlcNAc...) (high mannose) asparagine; alternate) is linked at Asn-305. An N-linked (GlcNAc...) (paucimannose) asparagine; alternate glycan is attached at Asn-305. 27 LRR repeats span residues 326–347 (RIRE…AFDS), 351–372 (SLQI…LFNN), 375–396 (VLRV…ETFN), 401–424 (TLLK…RNMT), 477–498 (GLKR…AFHE), 527–548 (SLQE…SFHF), 551–572 (NLRL…TFQG), 577–598 (KLEE…TFFD), 601–622 (ALRK…AFMN), 625–646 (ELEY…SFQN), 649–670 (KLEI…YFDQ), 676–696 (NLNV…SSWS), 708–729 (NIKI…YFRP), 733–754 (SLTH…VFGN), 757–778 (HLQW…AFKN), 781–802 (QLQL…IFKP), 805–826 (GLRI…LFYN), 828–849 (GMEK…SLSS), 854–875 (TLCE…DLSN), 879–900 (SLRY…VFAT), 903–924 (KLAV…SFMG), 928–948 (SLIK…IRLK), 949–970 (YLRE…LAHN), 973–994 (NLRM…TQAL), 996–1017 (HLRR…SFDG), 1021–1044 (DLEM…DSLP), and 1045–1066 (HLRS…PHLL). A glycan (N-linked (GlcNAc...) (high mannose) asparagine) is linked at Asn-361. Residue Asn-422 is glycosylated (N-linked (GlcNAc...) asparagine). A glycan (N-linked (GlcNAc...) (high mannose) asparagine) is linked at Asn-680. An N-linked (GlcNAc...) (high mannose) asparagine; alternate glycan is attached at Asn-692. A glycan (N-linked (GlcNAc...) (paucimannose) asparagine; alternate) is linked at Asn-692. N-linked (GlcNAc...) (high mannose) asparagine glycosylation occurs at Asn-718. Residue Asn-746 is glycosylated (N-linked (GlcNAc...) asparagine). N-linked (GlcNAc...) (high mannose) asparagine glycosylation is present at Asn-936. The N-linked (GlcNAc...) (paucimannose) asparagine glycan is linked to Asn-970. A glycan (N-linked (GlcNAc...) (complex) asparagine) is linked at Asn-1012. N-linked (GlcNAc...) (high mannose) asparagine glycans are attached at residues Asn-1122, Asn-1152, and Asn-1171. The 64-residue stretch at 1211–1274 (TDLNCDCDLG…DDLRETRCEN (64 aa)) folds into the LRRCT domain.

Belongs to the chaoptin family. In terms of tissue distribution, expressed in photoreceptor cells and their axons in the adult retina, the ocellus and larval photoreceptor organ.

It is found in the cell membrane. Required for photoreceptor cell morphogenesis. Mediates homophilic cellular adhesion. This chain is Chaoptin (chp), found in Drosophila melanogaster (Fruit fly).